The primary structure comprises 1488 residues: Indigoidine synthase (1488 aa).

Residues 229–585 (KNRAQRHPEQ…GGDGVARGYL (357 aa)) form an adenylation region. The region spanning 1137-1212 (APRNPLEHQV…KLAAWLSRAR (76 aa)) is the Carrier domain. The residue at position 1172 (Ser1172) is an O-(pantetheine 4'-phosphoryl)serine. Residues 1230 to 1346 (PIYCWPGLGG…ERVAAMNRKA (117 aa)) form a thioesterase region.

This sequence belongs to the ATP-dependent AMP-binding enzyme family. The cofactor is pantetheine 4'-phosphate.

The catalysed reaction is 2 FMN + 2 L-glutamine + 2 ATP + O2 = indigoidine + 2 FMNH2 + 2 AMP + 2 diphosphate + 2 H2O. It carries out the reaction FMN + L-glutamine + ATP = 3-amino-1,5-dihydropyridine-2,6-dione + FMNH2 + AMP + diphosphate. It catalyses the reaction 2 3-amino-1,5-dihydropyridine-2,6-dione + O2 = indigoidine + 2 H2O. It functions in the pathway pigment biosynthesis. Functionally, nonribosomal peptide synthetase involved in the biosynthesis of the blue pigment indigoidine, which is implicated in pathogenicity and protection from oxidative stress. Catalyzes the synthesis of the blue pigment using L-Gln as a substrate. Two glutamine molecules are cyclized and oxidized to form indigoidine. The chain is Indigoidine synthase from Dickeya dadantii (strain 3937) (Erwinia chrysanthemi (strain 3937)).